The sequence spans 651 residues: Polyadenylate-binding protein 1 (651 aa).

A compositionally biased stretch (low complexity) spans 1–27 (MSSTESPVPAAAAPAEAVPASTPAPAA). Residues 1–42 (MSSTESPVPAAAAPAEAVPASTPAPAAEQPAVGNGEQRNNAD) are disordered. 4 consecutive RRM domains span residues 47–125 (TSLY…WSQR), 135–211 (GNIF…HHIP), 227–304 (TNVY…RAQK), and 330–407 (VNLY…LAQR). 2 disordered regions span residues 481-554 (QPGQ…EADQ) and 632-651 (QNDS…KTEA). Pro residues predominate over residues 529 to 540 (AGQPVPGQPMPR). One can recognise a PABC domain in the interval 555–632 (PGALTAAALA…ALEVLKEYQQ (78 aa)). Over residues 636 to 651 (AGAEAEANAEAPKTEA) the composition is skewed to low complexity.

The protein belongs to the polyadenylate-binding protein type-1 family. In terms of assembly, part of large ribonucleoprotein complexes (mRNPs) containing RNA-binding proteins RRM4 and PAB1, endosome-binding protein UPA1, core scaffold protein UPA2 and associated factor GRP1. Interacts (via PABC domain) with UPA1 (via PAM2 domain). Interacts (via PABC domain) with UPA2 (via PAM2 domains).

The protein localises to the cytoplasm. It is found in the cytoskeleton. The protein resides in the endosome. Its function is as follows. RNA-binding protein involved in the formation of polar-growing hyphae which is essential for infection by the plant pathogen. Component of endosomal mRNA transport that regulates polarity of the infectious hyphae by transporting a broad spectrum of cargo mRNAs from the nucleus to cell poles. This chain is Polyadenylate-binding protein 1, found in Mycosarcoma maydis (Corn smut fungus).